A 440-amino-acid chain; its full sequence is VGFKAGVRDYRLTYYTPEYKTKDTDILAAFRMTPQPGVPAEEAGAAVAAESSTGTWTTVWTDGLTSLDRYKGRCYDIEPVAGEENQYIAYVAYPLDLFEEGSVTNLFTSIVGNVFGFKALRALRLEDLRIPPAYSKTFIGPPHGIQVERDKLNKYGRPLLGCTIKPKLGLSAKNYGRAVYECLRGGLDFTKDDENVNSQPFMRWRDRFLFVAEALFKSQAETGEIKGHYLNATAGTCEEMLKRAAFARELGAPIVMHDYLTGGFTANTSLAFYCRDNGLLLHIHRAMHAVIDRQRNHGMHFRVLAKALRMSGGDHIHAGTVVGKLEGEREVTLGFVDLLRDDYIEKDRSRGIYFTQDWVSMPGVLPVASGGIHVWHMPALTEIFGDDSVLQFGGGTLGHPWGNAPGAVANRVALEACVQARNEGRDLAREGNEIIRERSK.

The residue at position 4 (Lys-4) is an N6,N6,N6-trimethyllysine. Substrate contacts are provided by Asn-113 and Thr-163. The active-site Proton acceptor is Lys-165. Lys-167 provides a ligand contact to substrate. Residues Lys-191, Asp-193, and Glu-194 each contribute to the Mg(2+) site. Lys-191 carries the post-translational modification N6-carboxylysine. His-284 (proton acceptor) is an active-site residue. The substrate site is built by Arg-285, His-317, and Ser-369.

It belongs to the RuBisCO large chain family. Type I subfamily. Heterohexadecamer of 8 large chains and 8 small chains; disulfide-linked. The disulfide link is formed within the large subunit homodimers. The cofactor is Mg(2+). Post-translationally, the disulfide bond which can form in the large chain dimeric partners within the hexadecamer appears to be associated with oxidative stress and protein turnover.

It localises to the plastid. Its subcellular location is the chloroplast. It carries out the reaction 2 (2R)-3-phosphoglycerate + 2 H(+) = D-ribulose 1,5-bisphosphate + CO2 + H2O. It catalyses the reaction D-ribulose 1,5-bisphosphate + O2 = 2-phosphoglycolate + (2R)-3-phosphoglycerate + 2 H(+). In terms of biological role, ruBisCO catalyzes two reactions: the carboxylation of D-ribulose 1,5-bisphosphate, the primary event in carbon dioxide fixation, as well as the oxidative fragmentation of the pentose substrate in the photorespiration process. Both reactions occur simultaneously and in competition at the same active site. The protein is Ribulose bisphosphate carboxylase large chain of Onoclea sensibilis (Sensitive fern).